Consider the following 234-residue polypeptide: tRNA (guanine-N(1)-)-methyltransferase (234 aa).

S-adenosyl-L-methionine-binding positions include Gly115 and 135 to 140 (VGDYIL).

Belongs to the RNA methyltransferase TrmD family. Homodimer.

The protein resides in the cytoplasm. It catalyses the reaction guanosine(37) in tRNA + S-adenosyl-L-methionine = N(1)-methylguanosine(37) in tRNA + S-adenosyl-L-homocysteine + H(+). Specifically methylates guanosine-37 in various tRNAs. The polypeptide is tRNA (guanine-N(1)-)-methyltransferase (Rickettsia rickettsii (strain Iowa)).